The following is a 231-amino-acid chain: Probable caffeoyl-CoA O-methyltransferase 2 (231 aa).

Residues threonine 53, aspartate 75, 77–78, serine 83, aspartate 101, alanine 130, aspartate 152, aspartate 154, and tyrosine 161 each bind S-adenosyl-L-methionine; that span reads GV. Aspartate 152 contacts a divalent metal cation. Aspartate 178 and asparagine 179 together coordinate a divalent metal cation.

It belongs to the class I-like SAM-binding methyltransferase superfamily. Cation-dependent O-methyltransferase family. CCoAMT subfamily.

It carries out the reaction (E)-caffeoyl-CoA + S-adenosyl-L-methionine = (E)-feruloyl-CoA + S-adenosyl-L-homocysteine + H(+). The protein is Probable caffeoyl-CoA O-methyltransferase 2 (omt6) of Dictyostelium discoideum (Social amoeba).